The chain runs to 273 residues: Mitochondrial distribution and morphology protein 12 (273 aa).

Residues 1 to 260 form the SMP-LTD domain; that stretch reads MSFDINWEQL…WPSWINFDFY (260 aa). Positions 76–98 are disordered; sequence MSAEEETEGSDDEGYGGDRVRNR. Over residues 78 to 90 the composition is skewed to acidic residues; sequence AEEETEGSDDEGY.

This sequence belongs to the MDM12 family. Component of the ER-mitochondria encounter structure (ERMES) or MDM complex, composed of MMM1, MDM10, MDM12 and MDM34. An MMM1 homodimer associates with one molecule of MDM12 on each side in a pairwise head-to-tail manner, and the SMP-LTD domains of MMM1 and MDM12 generate a continuous hydrophobic tunnel for phospholipid trafficking.

It is found in the mitochondrion outer membrane. The protein resides in the endoplasmic reticulum membrane. Its function is as follows. Component of the ERMES/MDM complex, which serves as a molecular tether to connect the endoplasmic reticulum (ER) and mitochondria. Components of this complex are involved in the control of mitochondrial shape and protein biogenesis, and function in nonvesicular lipid trafficking between the ER and mitochondria. MDM12 is required for the interaction of the ER-resident membrane protein MMM1 and the outer mitochondrial membrane-resident beta-barrel protein MDM10. The MDM12-MMM1 subcomplex functions in the major beta-barrel assembly pathway that is responsible for biogenesis of all mitochondrial outer membrane beta-barrel proteins, and acts in a late step after the SAM complex. The MDM10-MDM12-MMM1 subcomplex further acts in the TOM40-specific pathway after the action of the MDM12-MMM1 complex. Essential for establishing and maintaining the structure of mitochondria and maintenance of mtDNA nucleoids. In Vanderwaltozyma polyspora (strain ATCC 22028 / DSM 70294 / BCRC 21397 / CBS 2163 / NBRC 10782 / NRRL Y-8283 / UCD 57-17) (Kluyveromyces polysporus), this protein is Mitochondrial distribution and morphology protein 12.